The chain runs to 203 residues: Inactive ribonuclease-like protein 9 (203 aa).

An N-terminal signal peptide occupies residues 1–25; the sequence is MRTPITTHSLLLLLLLQQLLQPVQL. Cystine bridges form between Cys-96/Cys-151, Cys-114/Cys-166, and Cys-121/Cys-128. Asn-129 and Asn-141 each carry an N-linked (GlcNAc...) asparagine glycan.

This sequence belongs to the pancreatic ribonuclease family.

It is found in the secreted. In terms of biological role, does not exhibit any ribonuclease activity. The protein is Inactive ribonuclease-like protein 9 (RNASE9) of Macaca assamensis (Assam macaque).